A 189-amino-acid polypeptide reads, in one-letter code: UPF0301 protein CAB604 (189 aa).

This sequence belongs to the UPF0301 (AlgH) family.

The sequence is that of UPF0301 protein CAB604 from Chlamydia abortus (strain DSM 27085 / S26/3) (Chlamydophila abortus).